Here is a 429-residue protein sequence, read N- to C-terminus: Glutamyl-tRNA reductase (429 aa).

Substrate-binding positions include 49-52 (TCNR), Ser-108, 113-115 (EAQ), and Gln-119. The active-site Nucleophile is the Cys-50. 188 to 193 (GAGEMS) contacts NADP(+).

This sequence belongs to the glutamyl-tRNA reductase family. As to quaternary structure, homodimer.

The enzyme catalyses (S)-4-amino-5-oxopentanoate + tRNA(Glu) + NADP(+) = L-glutamyl-tRNA(Glu) + NADPH + H(+). It participates in porphyrin-containing compound metabolism; protoporphyrin-IX biosynthesis; 5-aminolevulinate from L-glutamyl-tRNA(Glu): step 1/2. Its function is as follows. Catalyzes the NADPH-dependent reduction of glutamyl-tRNA(Glu) to glutamate 1-semialdehyde (GSA). This is Glutamyl-tRNA reductase from Rubrobacter xylanophilus (strain DSM 9941 / JCM 11954 / NBRC 16129 / PRD-1).